A 229-amino-acid chain; its full sequence is N-acetyltransferase MPR1 (229 aa).

The N-acetyltransferase domain occupies 65-219; it reads FNLEIESGKT…DAIIYGKDLT (155 aa). Asn-135 serves as a coordination point for substrate. 145-150 serves as a coordination point for CoA; sequence RGQKVG. Substrate is bound at residue 172-173; that stretch reads NL.

The protein belongs to the acetyltransferase family. As to quaternary structure, homodimer. In terms of processing, not glycosylated.

It localises to the cytoplasm. It is found in the mitochondrion. It catalyses the reaction L-glutamate 5-semialdehyde + acetyl-CoA = N-acetyl-L-glutamate 5-semialdehyde + CoA + H(+). In terms of biological role, N-acetyltransferase involved in oxidative stress resistance. Acetylates the toxic proline metabolism intermediate (S)-1-pyrroline-5-carboxylate (P5C), or more likely its spontaneously forming tautomer glutamate-5-semialdehyde (GSA) into N-acetyl-GSA for arginine synthesis in the mitochondria. P5C has been shown to increase the levels of reactive oxygen species (ROS) in the cell by inhibiting the function of the respiratory chain in the mitochondria. The enzyme is able to reduce intracellular ROS levels under P5C-induced oxidative stress and protects cells from damage by oxidative stress. Also acetylates and thereby detoxifies the proline analog azetidine-2-carboxylate (AZC), however it is unlikely that AZC is a natural substrate as it occurs only in plants belonging to the Lilaceae family. Does not acetylate proline. The polypeptide is N-acetyltransferase MPR1 (Saccharomyces cerevisiae (Baker's yeast)).